Consider the following 270-residue polypeptide: uncharacterized protein (270 aa).

An N-terminal signal peptide occupies residues 1-23 (MFNFITFILFAVVCISYCHKSRG). N-linked (GlcNAc...) asparagine glycans are attached at residues N246 and N252.

Its subcellular location is the secreted. This is an uncharacterized protein from Caenorhabditis elegans.